Reading from the N-terminus, the 171-residue chain is Moubatin (171 aa).

A signal peptide spans 1-15; that stretch reads MMLVLTTLIFSFSAS. Cystine bridges form between Cys-23–Cys-144, Cys-55–Cys-166, and Cys-118–Cys-145.

It belongs to the calycin superfamily. Lipocalin family. The N-terminus is blocked. Expressed in salivary glands.

The protein resides in the secreted. Functionally, tick salivary platelet aggregation inhibitor that plays an important part in the anti-hemostatic strategy of ticks. Acts by scavenging thromboxane A2 (TXA2), a potent inducer of platelet aggregation and blood vessel constriction. As a consequence, is a specific inhibitor of collagen-induced platelet aggregation. In addition, it also acts as a potent inhibitor of TXA2-mediated vasoconstriction. Has also been found to bind leukotriene B4 (LTB4) (which also derives from arachidonic acid, as TXA2) with affinities in the nanomolar range. It does not interact with complement protein C5. This Ornithodoros moubata (Soft tick) protein is Moubatin.